A 514-amino-acid polypeptide reads, in one-letter code: LWamide neuropeptides (514 aa).

The N-terminal stretch at 1 to 22 (MALKCHLVLLAITLLLAQCSGS) is a signal peptide. Residues 23 to 53 (VDKKDSTTNHLDEKKTDSTEAHIVQETDALK) show a composition bias toward basic and acidic residues. Positions 23-75 (VDKKDSTTNHLDEKKTDSTEAHIVQETDALKENSYLGAEEESKEEDKKRSAAP) are excised as a propeptide. The disordered stretch occupies residues 23–180 (VDKKDSTTNH…PGLWGRSADA (158 aa)). Tryptophan amide is present on residues tryptophan 81 and tryptophan 90. Positions 93-97 (SADAG) are excised as a propeptide. Tryptophan amide is present on residues tryptophan 102 and tryptophan 111. A propeptide spanning residues 114-118 (SADAG) is cleaved from the precursor. 2 positions are modified to tryptophan amide: tryptophan 123 and tryptophan 132. The propeptide occupies 135 to 139 (SADAG). Tryptophan 144 and tryptophan 153 each carry tryptophan amide. Residues 156 to 160 (SADAG) constitute a propeptide that is removed on maturation. Tryptophan 165 and tryptophan 174 each carry tryptophan amide. A propeptide spanning residues 177–181 (SADAR) is cleaved from the precursor. Residue tryptophan 186 is modified to Tryptophan amide. Residues 190–199 (EIYALWGGKR) constitute a propeptide that is removed on maturation. Tryptophan 205 is subject to Tryptophan amide. Residues 208 to 212 (SADPG) constitute a propeptide that is removed on maturation. Tryptophan 217 is modified (tryptophan amide). A propeptide spanning residues 221–230 (ELVGLWGGKR) is cleaved from the precursor. Tryptophan 236 carries the post-translational modification Tryptophan amide. Residues 239 to 243 (SAEAG) constitute a propeptide that is removed on maturation. A tryptophan amide mark is found at tryptophan 248 and tryptophan 257. The tract at residues 258-475 (GRSADPLQPG…GRSAGSGQLG (218 aa)) is disordered. Positions 260-264 (SADPL) are excised as a propeptide. Tryptophan amide occurs at positions 269 and 278. Positions 281-284 (SADP) are excised as a propeptide. Tryptophan amide is present on residues tryptophan 290 and tryptophan 299. Positions 302-305 (SADP) are excised as a propeptide. A tryptophan amide mark is found at tryptophan 311 and tryptophan 320. Positions 323–326 (SADP) are excised as a propeptide. 2 positions are modified to tryptophan amide: tryptophan 332 and tryptophan 341. Positions 344–347 (SADP) are excised as a propeptide. Tryptophan 353 bears the Tryptophan amide mark. A propeptide spanning residues 356–366 (SPGLWGRSADP) is cleaved from the precursor. Tryptophan 372 bears the Tryptophan amide mark. The propeptide occupies 376 to 387 (QNPGFWGRSADP). A tryptophan amide mark is found at tryptophan 393 and tryptophan 402. Positions 405–408 (SADP) are excised as a propeptide. Residues tryptophan 414 and tryptophan 423 each carry the tryptophan amide modification. Residues 426–429 (SADP) constitute a propeptide that is removed on maturation. A tryptophan amide mark is found at tryptophan 435 and tryptophan 444. A propeptide spanning residues 447-450 (SADP) is cleaved from the precursor. Residues tryptophan 456 and tryptophan 465 each carry the tryptophan amide modification. Residues 468 to 472 (SAGSG) constitute a propeptide that is removed on maturation. Tryptophan amide is present on residues tryptophan 477 and tryptophan 487. The disordered stretch occupies residues 489 to 514 (RSAEPPQFEDLEDLKKKSAIPQPKGQ). Positions 490–514 (SAEPPQFEDLEDLKKKSAIPQPKGQ) are excised as a propeptide.

The protein belongs to the LWamide neuropeptide family.

It is found in the secreted. Functionally, metamorphosin A may be part of an internal signaling system involved in control of metamorphosis. This chain is LWamide neuropeptides, found in Anthopleura elegantissima (Green aggregating anemone).